The sequence spans 966 residues: SH3 domain-binding protein 4 (966 aa).

One can recognise an SH3 1 domain in the interval 57–116; that stretch reads GAAREVVAIKDCCPSSFTTLKFSKGDRLYVLDSSGAEWWYAHNNTEMGYIPAAYVEPINY. Residues 322–457 form the ZU5 domain; it reads TNIVCRLDSS…LEPCMYVCVV (136 aa). One can recognise an SH3 2 domain in the interval 657 to 727; the sequence is NNLKFGKLIK…HAKNVLVVGK (71 aa).

As to quaternary structure, homodimer or homooligomer.

The protein resides in the membrane. It localises to the clathrin-coated pit. The protein localises to the cytoplasmic vesicle. Its subcellular location is the clathrin-coated vesicle. It is found in the nucleus. In terms of biological role, possible role in regulating endocytosis of the transferrin receptor at the plasma membrane. Alternatively, may function as a negative regulator of the amino acid-induced TOR signaling by inhibiting the formation of active Rag GTPase complexes. Preferentially binds inactive Rag GTPase complexes and prevents their interaction with the mTORC1 complex inhibiting its relocalization to lysosomes and its activation. Thereby, may indirectly regulate cell growth, proliferation and autophagy. The protein is SH3 domain-binding protein 4 (sh3bp4) of Seriola quinqueradiata (Five-ray yellowtail).